We begin with the raw amino-acid sequence, 710 residues long: Mitochondrial intermediate peptidase (710 aa).

The transit peptide at 1–33 (MLLAAGTRYAYRLCGRRAAAALQGRAGRSCARS) directs the protein to the mitochondrion. Lys-124 is modified (N6-acetyllysine). His-492 is a Zn(2+) binding site. Glu-493 is an active-site residue. Zn(2+)-binding residues include His-496 and His-499.

This sequence belongs to the peptidase M3 family. Monomer. The cofactor is Zn(2+).

It localises to the mitochondrion matrix. The catalysed reaction is Release of an N-terminal octapeptide as second stage of processing of some proteins imported into the mitochondrion.. Its activity is regulated as follows. Activity is divalent cation-dependent. It is stimulated by manganese, magnesium or calcium ions and reversibly inhibited by zinc, cobalt and iron. Its function is as follows. Cleaves proteins, imported into the mitochondrion, to their mature size. This is Mitochondrial intermediate peptidase (Mipep) from Rattus norvegicus (Rat).